Reading from the N-terminus, the 143-residue chain is FAD synthase (143 aa).

Residues 11–12, 16–19, and aspartate 94 contribute to the ATP site; these read TF and HPGH.

The protein belongs to the archaeal FAD synthase family. As to quaternary structure, homodimer. Requires a divalent metal cation as cofactor.

It catalyses the reaction FMN + ATP + H(+) = FAD + diphosphate. It functions in the pathway cofactor biosynthesis; FAD biosynthesis; FAD from FMN: step 1/1. Catalyzes the transfer of the AMP portion of ATP to flavin mononucleotide (FMN) to produce flavin adenine dinucleotide (FAD) coenzyme. The polypeptide is FAD synthase (Halomicrobium mukohataei (strain ATCC 700874 / DSM 12286 / JCM 9738 / NCIMB 13541) (Haloarcula mukohataei)).